The chain runs to 379 residues: Nucleosome assembly protein 1;2 (379 aa).

Residues 26–80 (VNALKNKLQNLAGQHSDVLENLTPPVRKRVEFLREIQNQYDEMEAKFFEERAALE) are a coiled coil. Residue Ser-41 is modified to Phosphoserine. Positions 47-62 (LTPPVRKRVEFLREIQ) match the Nuclear export signal motif. The Nuclear localization signal motif lies at 222–227 (KKKPKK). Positions 298–379 (AVEADDLDIE…GERPPECKQQ (82 aa)) are disordered. Over residues 299–342 (VEADDLDIEDDDDEIDEDDDEEDEEDDEDDEEEDDEDDDEEEEA) the composition is skewed to acidic residues. The span at 347 to 360 (KSKKKSSAGHKKAG) shows a compositional bias: basic residues. Cys-376 is modified (cysteine methyl ester). Cys-376 is lipidated: S-farnesyl cysteine. Positions 377–379 (KQQ) are cleaved as a propeptide — removed in mature form.

It belongs to the nucleosome assembly protein (NAP) family. As to quaternary structure, can form homomeric and heteromeric protein complexes with NAP1;1, NAP1;3 and NAP1;4. Binds histone H2A. In terms of tissue distribution, ubiquitous.

The protein resides in the nucleus. It is found in the cytoplasm. May modulate chromatin structure by regulation of nucleosome assembly/disassembly. May function in nucleotide excision repair (NER). Involved in somatic homologous recombination. In Arabidopsis thaliana (Mouse-ear cress), this protein is Nucleosome assembly protein 1;2 (NAP1;2).